Consider the following 619-residue polypeptide: Dihydroxy-acid dehydratase 1 (619 aa).

Aspartate 81 is a Mg(2+) binding site. Position 122 (cysteine 122) interacts with [2Fe-2S] cluster. The Mg(2+) site is built by aspartate 123 and lysine 124. An N6-carboxylysine modification is found at lysine 124. Cysteine 198 is a binding site for [2Fe-2S] cluster. Glutamate 494 provides a ligand contact to Mg(2+). Serine 520 (proton acceptor) is an active-site residue.

It belongs to the IlvD/Edd family. Homodimer. It depends on [2Fe-2S] cluster as a cofactor. Requires Mg(2+) as cofactor.

The enzyme catalyses (2R)-2,3-dihydroxy-3-methylbutanoate = 3-methyl-2-oxobutanoate + H2O. It carries out the reaction (2R,3R)-2,3-dihydroxy-3-methylpentanoate = (S)-3-methyl-2-oxopentanoate + H2O. The protein operates within amino-acid biosynthesis; L-isoleucine biosynthesis; L-isoleucine from 2-oxobutanoate: step 3/4. It participates in amino-acid biosynthesis; L-valine biosynthesis; L-valine from pyruvate: step 3/4. Functions in the biosynthesis of branched-chain amino acids. Catalyzes the dehydration of (2R,3R)-2,3-dihydroxy-3-methylpentanoate (2,3-dihydroxy-3-methylvalerate) into 2-oxo-3-methylpentanoate (2-oxo-3-methylvalerate) and of (2R)-2,3-dihydroxy-3-methylbutanoate (2,3-dihydroxyisovalerate) into 2-oxo-3-methylbutanoate (2-oxoisovalerate), the penultimate precursor to L-isoleucine and L-valine, respectively. The protein is Dihydroxy-acid dehydratase 1 of Bordetella bronchiseptica (strain ATCC BAA-588 / NCTC 13252 / RB50) (Alcaligenes bronchisepticus).